We begin with the raw amino-acid sequence, 187 residues long: uncharacterized protein (187 aa).

4 helical membrane passes run isoleucine 29–isoleucine 50, phenylalanine 70–tyrosine 92, isoleucine 128–arginine 147, and leucine 154–leucine 176.

It is found in the cell membrane. This is an uncharacterized protein from Archaeoglobus fulgidus (strain ATCC 49558 / DSM 4304 / JCM 9628 / NBRC 100126 / VC-16).